The chain runs to 259 residues: Sesquipedalian-2 (259 aa).

One can recognise a PH domain in the interval 17–121 (PADHTGFLRS…WVKALSRASF (105 aa)). Positions 124-150 (MRLVVRELESQLQDARQSLALHRCASQ) form a coiled coil. The disordered stretch occupies residues 155 to 178 (SCSKSQAPDHRAPDPENGHFLPRD). Residues 161–178 (APDHRAPDPENGHFLPRD) are compositionally biased toward basic and acidic residues. Residues 223–235 (CFSTLHDWYGKEI) carry the F&amp;H motif.

The protein belongs to the sesquipedalian family. Forms homodimers and heterodimers with PHETA1. Interacts with OCRL and INPP5B.

The protein localises to the early endosome. It is found in the recycling endosome. It localises to the golgi apparatus. The protein resides in the trans-Golgi network. Its subcellular location is the cytoplasmic vesicle. The protein localises to the clathrin-coated vesicle. Plays a role in endocytic trafficking. Required for receptor recycling from endosomes, both to the trans-Golgi network and the plasma membrane. This chain is Sesquipedalian-2, found in Mus musculus (Mouse).